A 299-amino-acid polypeptide reads, in one-letter code: CCR4-NOT transcription complex subunit 9 (299 aa).

The protein belongs to the CNOT9 family. As to quaternary structure, homodimer. Component of the CCR4-NOT complex.

Its subcellular location is the nucleus. It is found in the cytoplasm. The protein resides in the P-body. Functionally, component of the CCR4-NOT complex which is one of the major cellular mRNA deadenylases and is linked to various cellular processes including bulk mRNA degradation, miRNA-mediated repression, translational repression during translational initiation and general transcription regulation. Additional complex functions may be a consequence of its influence on mRNA expression. Involved in down-regulation of MYB- and JUN-dependent transcription. Enhances ligand-dependent transcriptional activity of nuclear hormone receptors. May play a role in cell differentiation. This is CCR4-NOT transcription complex subunit 9 from Xenopus tropicalis (Western clawed frog).